A 213-amino-acid polypeptide reads, in one-letter code: V-type proton ATPase subunit c'' (213 aa).

Residues 1–14 (MNKESKDDDMSLGK) are Vacuolar-facing. Residues 15-35 (FSFSHFLYYLVLIVVIVYGLY) form a helical membrane-spanning segment. Over 36–61 (KLFTGHGSDINFGKFLLRTSPYMWAN) the chain is Cytoplasmic. A helical transmembrane segment spans residues 62 to 82 (LGIALCVGLSVVGAAWGIFIT). The Vacuolar portion of the chain corresponds to 83–100 (GSSMIGAGVRAPRITTKN). A helical membrane pass occupies residues 101-121 (LISIIFCEVVAIYGLIIAIVF). At 122-144 (SSKLTVATAENMYSKSNLYTGYS) the chain is on the cytoplasmic side. Residues 145–165 (LFWAGITVGASNLICGIAVGI) form a helical membrane-spanning segment. The Vacuolar portion of the chain corresponds to 166–183 (TGATAAISDAADSALFVK). Residues 184–204 (ILVIEIFGSILGLLGLIVGLL) traverse the membrane as a helical segment. At 205–213 (MAGKASEFQ) the chain is on the cytoplasmic side.

It belongs to the V-ATPase proteolipid subunit family. As to quaternary structure, V-ATPase is a heteromultimeric enzyme composed of a peripheral catalytic V1 complex (components A to H) attached to an integral membrane V0 proton pore complex (components: a, c, c', c'', d, e, f and VOA1). The decameric c-ring forms the proton-conducting pore, and is composed of eight proteolipid subunits c, one subunit c' and one subunit c''.

It localises to the vacuole membrane. Its function is as follows. Proton-conducting pore forming subunit of the V0 complex of vacuolar(H+)-ATPase (V-ATPase), a multisubunit enzyme composed of a peripheral complex (V1) that hydrolyzes ATP and a membrane integral complex (V0) that translocates protons. V-ATPase is responsible for acidifying and maintaining the pH of intracellular compartments. The chain is V-type proton ATPase subunit c'' (VMA16) from Saccharomyces cerevisiae (strain ATCC 204508 / S288c) (Baker's yeast).